The primary structure comprises 59 residues: Cecropin-A1 (59 aa).

An N-terminal signal peptide occupies residues 1-23; sequence MNFTKLFAIVLLAALVLLGQTEA.

This sequence belongs to the cecropin family.

Its subcellular location is the secreted. Functionally, cecropins have lytic and antibacterial activity against several Gram-positive and Gram-negative bacteria. The polypeptide is Cecropin-A1 (CECA1) (Aedes albopictus (Asian tiger mosquito)).